We begin with the raw amino-acid sequence, 116 residues long: MAGVLKKTTGLVGLAVCSTPHERLSILYTKILDVLAEIPKNAAYRKYTEQITNEKLAMVKAEPDVKKLEDQLQGGQLEEVILQAEHELSLARKMRDWKPWEPLVEEPPADQWKWPI.

Alanine 2 is subject to N-acetylalanine. 3 positions are modified to N6-acetyllysine: lysine 30, lysine 46, and lysine 60. Serine 89 carries the post-translational modification Phosphoserine. At lysine 98 the chain carries N6-acetyllysine; alternate. Lysine 98 bears the N6-succinyllysine; alternate mark.

It belongs to the complex I NDUFA5 subunit family. Complex I is composed of 45 different subunits.

Its subcellular location is the mitochondrion inner membrane. Accessory subunit of the mitochondrial membrane respiratory chain NADH dehydrogenase (Complex I), that is believed not to be involved in catalysis. Complex I functions in the transfer of electrons from NADH to the respiratory chain. The immediate electron acceptor for the enzyme is believed to be ubiquinone. This chain is NADH dehydrogenase [ubiquinone] 1 alpha subcomplex subunit 5 (NDUFA5), found in Macaca fascicularis (Crab-eating macaque).